We begin with the raw amino-acid sequence, 75 residues long: Nigwaprin-a (75 aa).

Positions 1–24 are cleaved as a signal peptide; the sequence is MSSGGLLLLLGLLTLWAELTPVSG. A WAP domain is found at 27–72; it reads RPVKPGLCPPRPQKPPCVKECKNDWSCRGEQKCCRYGCIYECRDPI. Intrachain disulfides connect C34/C60, C43/C64, C47/C59, and C53/C68.

This sequence belongs to the venom waprin family. In terms of tissue distribution, expressed by the venom gland.

The protein localises to the secreted. Its function is as follows. Damages membranes of susceptible bacteria. Has no hemolytic activity. Not toxic to mice. Does not inhibit the proteinases elastase and cathepsin G. This Cryptophis nigrescens (Eastern small-eyed snake) protein is Nigwaprin-a.